The chain runs to 194 residues: Fe/S biogenesis protein NfuA (194 aa).

Cysteine 152 and cysteine 155 together coordinate [4Fe-4S] cluster.

This sequence belongs to the NfuA family. Homodimer. [4Fe-4S] cluster is required as a cofactor.

Its function is as follows. Involved in iron-sulfur cluster biogenesis. Binds a 4Fe-4S cluster, can transfer this cluster to apoproteins, and thereby intervenes in the maturation of Fe/S proteins. Could also act as a scaffold/chaperone for damaged Fe/S proteins. The sequence is that of Fe/S biogenesis protein NfuA from Pseudomonas fluorescens (strain Pf0-1).